We begin with the raw amino-acid sequence, 435 residues long: Probable exopolygalacturonase B (435 aa).

An N-terminal signal peptide occupies residues 1-15 (MKFFTAALFASAVSA). N-linked (GlcNAc...) asparagine glycans are attached at residues N59, N184, and N224. The Proton donor role is filled by D254. C256 and C273 are disulfide-bonded. 2 N-linked (GlcNAc...) asparagine glycosylation sites follow: N262 and N274. Residue H277 is part of the active site. N-linked (GlcNAc...) asparagine glycans are attached at residues N301, N328, N365, and N368. A disulfide bridge connects residues C391 and C397.

This sequence belongs to the glycosyl hydrolase 28 family.

The protein resides in the secreted. The enzyme catalyses [(1-&gt;4)-alpha-D-galacturonosyl](n) + H2O = alpha-D-galacturonate + [(1-&gt;4)-alpha-D-galacturonosyl](n-1). Its function is as follows. Specific in hydrolyzing the terminal glycosidic bond of polygalacturonic acid and oligogalacturonates. In Aspergillus terreus (strain NIH 2624 / FGSC A1156), this protein is Probable exopolygalacturonase B (pgxB).